We begin with the raw amino-acid sequence, 273 residues long: 2-dehydro-3-deoxyphosphooctonate aldolase (273 aa).

It belongs to the KdsA family.

The protein resides in the cytoplasm. It carries out the reaction D-arabinose 5-phosphate + phosphoenolpyruvate + H2O = 3-deoxy-alpha-D-manno-2-octulosonate-8-phosphate + phosphate. The protein operates within carbohydrate biosynthesis; 3-deoxy-D-manno-octulosonate biosynthesis; 3-deoxy-D-manno-octulosonate from D-ribulose 5-phosphate: step 2/3. It functions in the pathway bacterial outer membrane biogenesis; lipopolysaccharide biosynthesis. The sequence is that of 2-dehydro-3-deoxyphosphooctonate aldolase from Nitratidesulfovibrio vulgaris (strain DP4) (Desulfovibrio vulgaris).